The following is a 421-amino-acid chain: Histidine--tRNA ligase (421 aa).

It belongs to the class-II aminoacyl-tRNA synthetase family. As to quaternary structure, homodimer.

It localises to the cytoplasm. It carries out the reaction tRNA(His) + L-histidine + ATP = L-histidyl-tRNA(His) + AMP + diphosphate + H(+). The sequence is that of Histidine--tRNA ligase from Fervidobacterium nodosum (strain ATCC 35602 / DSM 5306 / Rt17-B1).